The following is a 1004-amino-acid chain: Centriolar coiled-coil protein of 110 kDa (1004 aa).

The interval 1–221 (MEEYEEFCEK…SCLAEVTPDP (221 aa)) is CEP97 binding. Residues 51 to 90 (EKRKKIQEEKQKALDVQSRKQANRKKALLTRVQEILENVQ) adopt a coiled-coil conformation. Residues 64–82 (LDVQSRKQANRKKALLTRV) are calmodulin-binding. A required for interaction with CEP290 region spans residues 67–82 (QSRKQANRKKALLTRV). Disordered stretches follow at residues 147-194 (PVNN…SSAS) and 239-279 (RELS…APPM). Residue S170 is modified to Phosphoserine. Positions 243-252 (SRSLRNSLKR) are enriched in low complexity. The span at 253 to 276 (SVNETHSDRENDAAKASDCVKEKA) shows a compositional bias: basic and acidic residues. Positions 349–564 (ENKVKSLKGP…QTQTSRQQMD (216 aa)) are interaction with CEP76. A phosphoserine mark is found at S364, S370, and S398. The segment at 401–433 (GKEEAVDRTAPAAAETTNESETVPKSPTDLTGV) is disordered. Positions 415-433 (ETTNESETVPKSPTDLTGV) are enriched in polar residues. Residue S550 is modified to Phosphoserine. Residues 641–699 (QELLKSKMLAFEEMRKRLEEQHAQQLSLLIAEQEREQEQLQKEIEEQEKMLKEKAVTTD) adopt a coiled-coil conformation. Calmodulin-binding regions lie at residues 773 to 813 (GRAQ…DKLK) and 901 to 916 (VALSVATQKSLDRKKF). Residues 955 to 1004 (LSRQGTPKTSVKGVVQNRQKPSQSRVPNRAPVSGAYAGKTQRKRPNVATI) are disordered. Over residues 970 to 980 (QNRQKPSQSRV) the composition is skewed to polar residues. Over residues 994 to 1004 (TQRKRPNVATI) the composition is skewed to basic residues.

Interacts with CALM1, CETN2, CEP76, CEP104, CEP290 and TALPID3. Interacts with CEP97. Seems to associate with discrete CETN2, CEP97 and CEP290-containing complexes. Interacts with NEURL4 and CCNF; these interactions are not mutually exclusive and both lead to CCP110 ubiquitination and proteasome-dependent degradation. Via its interaction with NEURL4, may indirectly interact with HERC2. Interacts with KIF24, leading to its recruitment to centrioles. Interacts with USP20 and USP33. Interacts with MPHOSPH9. Interacts (via N-terminal region) with ENKD1 (via central region); ENKD1 competes with CEP97 for binding to CCP110, destabilizing the interaction between CP110 and CEP97 which promotes the removal of CCP110 and CEP97 from the mother centriole and allows the initiation of ciliogenesis. Post-translationally, phosphorylated by CDKs. Ubiquitinated by the SCF(CCNF) during G2 phase, leading to its degradation by the proteasome and preventing centrosome reduplication. Deubiquitinated by USP33 in S and G2/M phase, leading to stabilize CCP110 during the period which centrioles duplicate and elongate. Ubiquitinated by the EDVP complex, leading to its degradation.

The protein resides in the cytoplasm. Its subcellular location is the cytoskeleton. It localises to the microtubule organizing center. The protein localises to the centrosome. It is found in the centriole. The protein resides in the cilium basal body. In terms of biological role, necessary for centrosome duplication at different stages of procentriole formation. Acts as a key negative regulator of ciliogenesis in collaboration with CEP97 by capping the mother centriole thereby preventing cilia formation. Also involved in promoting ciliogenesis. May play a role in the assembly of the mother centriole subdistal appendages (SDA) thereby effecting the fusion of recycling endosomes to basal bodies during cilia formation. Required for correct spindle formation and has a role in regulating cytokinesis and genome stability via cooperation with CALM1 and CETN2. The sequence is that of Centriolar coiled-coil protein of 110 kDa (Ccp110) from Mus musculus (Mouse).